The following is a 513-amino-acid chain: Catalase (513 aa).

Positions 1–30 (MNPSLNAFRPGRLLVAASLTASLLSLSVQA) are cleaved as a signal peptide. Residues His81 and Asn153 contribute to the active site. Position 361 (Tyr361) interacts with heme. The span at 391–407 (DGALNAGHSTSGVNYQP) shows a compositional bias: polar residues. A disordered region spans residues 391-413 (DGALNAGHSTSGVNYQPSRLDPR).

Belongs to the catalase family. Heme is required as a cofactor.

It localises to the periplasm. The enzyme catalyses 2 H2O2 = O2 + 2 H2O. In terms of biological role, decomposes hydrogen peroxide into water and oxygen; serves to protect cells from the toxic effects of hydrogen peroxide. The chain is Catalase (katB) from Pseudomonas aeruginosa (strain ATCC 15692 / DSM 22644 / CIP 104116 / JCM 14847 / LMG 12228 / 1C / PRS 101 / PAO1).